The chain runs to 256 residues: Deoxyribose-phosphate aldolase (256 aa).

Aspartate 102 functions as the Proton donor/acceptor in the catalytic mechanism. The active-site Schiff-base intermediate with acetaldehyde is lysine 165. Lysine 197 (proton donor/acceptor) is an active-site residue.

This sequence belongs to the DeoC/FbaB aldolase family. DeoC type 2 subfamily.

Its subcellular location is the cytoplasm. The enzyme catalyses 2-deoxy-D-ribose 5-phosphate = D-glyceraldehyde 3-phosphate + acetaldehyde. It functions in the pathway carbohydrate degradation; 2-deoxy-D-ribose 1-phosphate degradation; D-glyceraldehyde 3-phosphate and acetaldehyde from 2-deoxy-alpha-D-ribose 1-phosphate: step 2/2. Functionally, catalyzes a reversible aldol reaction between acetaldehyde and D-glyceraldehyde 3-phosphate to generate 2-deoxy-D-ribose 5-phosphate. The chain is Deoxyribose-phosphate aldolase from Shewanella sp. (strain W3-18-1).